A 28-amino-acid chain; its full sequence is N-acetyl-D-galactosamine-binding lectin subunit A (28 aa).

The protein belongs to the ribosome-inactivating protein family. As to quaternary structure, disulfide-linked heterodimer of A and B chains.

It catalyses the reaction Endohydrolysis of the N-glycosidic bond at one specific adenosine on the 28S rRNA.. In terms of biological role, gal / GalNAc-specific lectin. Agglutinates both native and trypsin-treated rabbit erythrocytes but not human erythrocytes irrespective of blood group type. The polypeptide is N-acetyl-D-galactosamine-binding lectin subunit A (Iris hollandica (Dutch iris)).